A 423-amino-acid polypeptide reads, in one-letter code: Phaseolin (423 aa).

A signal peptide spans arginine 1–alanine 21. The N-linked (GlcNAc...) asparagine glycan is linked to asparagine 28. 2 consecutive Cupin type-1 domains span residues phenylalanine 35–asparagine 193 and lysine 228–glutamine 383. 4 N-linked (GlcNAc...) asparagine glycosylation sites follow: asparagine 243, asparagine 332, asparagine 390, and asparagine 396. Residues glycine 397 to tyrosine 423 form a disordered region. Over residues glutamine 414–tyrosine 423 the composition is skewed to basic residues.

This sequence belongs to the 7S seed storage protein family. As to quaternary structure, homotrimer.

The protein resides in the vacuole. It localises to the aleurone grain. Major seed storage protein. The polypeptide is Phaseolin (PHS) (Phaseolus lunatus (Lima bean)).